Consider the following 178-residue polypeptide: Endothelin-2 (178 aa).

The N-terminal stretch at 1-24 is a signal peptide; that stretch reads MVAVPTAWCSVALALLLALQEGKG. The propeptide occupies 25–46; sequence QVAAAPDHPAPSPRARGSHLRP. 2 disulfides stabilise this stretch: Cys49-Cys63 and Cys51-Cys59. Residues 70–178 constitute a propeptide that is removed on maturation; sequence VNTPGQTAPY…RPMYPRRRKT (109 aa). The tract at residues 96-111 is endothelin-like; the sequence is CECSSSGDPACATFCH. The segment at 158-178 is disordered; the sequence is ARQHQEAEREPRPMYPRRRKT. The segment covering 160–169 has biased composition (basic and acidic residues); that stretch reads QHQEAEREPR.

Belongs to the endothelin/sarafotoxin family.

Its subcellular location is the secreted. Functionally, endothelins are endothelium-derived vasoconstrictor peptides. This chain is Endothelin-2 (EDN2), found in Mustela putorius furo (European domestic ferret).